The chain runs to 511 residues: 2-isopropylmalate synthase (511 aa).

Positions 5–267 constitute a Pyruvate carboxyltransferase domain; the sequence is LIIFDTTLRD…DTDINATHIL (263 aa). Mn(2+) contacts are provided by D14, H202, H204, and N238. The interval 392–511 is regulatory domain; sequence KLVSLKVCTE…ATNKAQHPQI (120 aa).

The protein belongs to the alpha-IPM synthase/homocitrate synthase family. LeuA type 1 subfamily. As to quaternary structure, homodimer. Requires Mn(2+) as cofactor.

The protein resides in the cytoplasm. It carries out the reaction 3-methyl-2-oxobutanoate + acetyl-CoA + H2O = (2S)-2-isopropylmalate + CoA + H(+). It participates in amino-acid biosynthesis; L-leucine biosynthesis; L-leucine from 3-methyl-2-oxobutanoate: step 1/4. Catalyzes the condensation of the acetyl group of acetyl-CoA with 3-methyl-2-oxobutanoate (2-ketoisovalerate) to form 3-carboxy-3-hydroxy-4-methylpentanoate (2-isopropylmalate). This Ruthia magnifica subsp. Calyptogena magnifica protein is 2-isopropylmalate synthase.